Consider the following 234-residue polypeptide: MAKLTKRMRVIREKVDATKQYDINEAIALLKELATAKFNESVDVAVNLGIDARKSDQNVRGATVLPHGTGRSVRVAVFTQGPNAEAAKAAGAELVGMEDLADQIKKGEMNFDVVIASPDAMRVVGLLGQVLGPRGLMPNPKVGTVTPNVAEAVKNAKAGQVRYRNDKNGIIHTTIGKVDFDADKLKENLEALLVALKKAKPSQAKGVYIKKVSISTTMGAGVAVDQAGLSASAN.

It belongs to the universal ribosomal protein uL1 family. In terms of assembly, part of the 50S ribosomal subunit.

Functionally, binds directly to 23S rRNA. The L1 stalk is quite mobile in the ribosome, and is involved in E site tRNA release. Its function is as follows. Protein L1 is also a translational repressor protein, it controls the translation of the L11 operon by binding to its mRNA. In Salmonella gallinarum (strain 287/91 / NCTC 13346), this protein is Large ribosomal subunit protein uL1.